The chain runs to 148 residues: Sporulation inhibitor of replication protein SirA (148 aa).

The protein belongs to the SirA family. In terms of assembly, interacts with DnaA. Forms a 1:1 complex with domain I of DnaA.

Its subcellular location is the cytoplasm. Functionally, inhibits DNA replication initiation during sporulation, preventing overinitiation and thus enforcing diploidy; probably the main regulator of sporulation replication initiation under Spo0A control. During sporulation SirA prevents DnaA association with the replication origin to prevent excessive chromosome replication. Alternatively SirA binds to domain I of DnaA and prevent its interaction with DnaD, preventing DNA replication initiation. Upon ectopic expression during vegetative growth reduces chromosome copy number, leading to elongated cells with that can have a single nucleoid or be anucleate. Ectopic expression during vegetative growth blocks DnaA at oriC while blocking recruitment of DnaD to oriC. Plays a significant role during the onset of sporulation. This is Sporulation inhibitor of replication protein SirA from Bacillus subtilis (strain 168).